The sequence spans 169 residues: Peptide deformylase (169 aa).

Residues cysteine 92 and histidine 134 each contribute to the Fe cation site. The active site involves glutamate 135. Histidine 138 contributes to the Fe cation binding site.

The protein belongs to the polypeptide deformylase family. Requires Fe(2+) as cofactor.

It catalyses the reaction N-terminal N-formyl-L-methionyl-[peptide] + H2O = N-terminal L-methionyl-[peptide] + formate. Functionally, removes the formyl group from the N-terminal Met of newly synthesized proteins. Requires at least a dipeptide for an efficient rate of reaction. N-terminal L-methionine is a prerequisite for activity but the enzyme has broad specificity at other positions. The sequence is that of Peptide deformylase from Cellvibrio japonicus (strain Ueda107) (Pseudomonas fluorescens subsp. cellulosa).